Reading from the N-terminus, the 198-residue chain is Outer-membrane lipoprotein carrier protein (198 aa).

Residues 1-17 form the signal peptide; the sequence is MKKFLFSLCLLSSTVLA.

This sequence belongs to the LolA family. Monomer.

The protein localises to the periplasm. Functionally, participates in the translocation of lipoproteins from the inner membrane to the outer membrane. Only forms a complex with a lipoprotein if the residue after the N-terminal Cys is not an aspartate (The Asp acts as a targeting signal to indicate that the lipoprotein should stay in the inner membrane). The sequence is that of Outer-membrane lipoprotein carrier protein from Aliivibrio fischeri (strain ATCC 700601 / ES114) (Vibrio fischeri).